We begin with the raw amino-acid sequence, 216 residues long: Probable phosphatase SPAC513.02 (216 aa).

The Tele-phosphohistidine intermediate role is filled by His15.

The protein belongs to the phosphoglycerate mutase family. BPG-dependent PGAM subfamily.

It localises to the cytoplasm. It is found in the nucleus. The chain is Probable phosphatase SPAC513.02 from Schizosaccharomyces pombe (strain 972 / ATCC 24843) (Fission yeast).